Consider the following 314-residue polypeptide: Serine/threonine-protein phosphatase PP2A-5 catalytic subunit (314 aa).

The Mn(2+) site is built by D62, H64, D90, and N122. H123 serves as the catalytic Proton donor. Mn(2+)-binding residues include H172 and H246.

It belongs to the PPP phosphatase family. PP-2A subfamily. It depends on Mn(2+) as a cofactor.

It is found in the cytoplasm. It carries out the reaction O-phospho-L-seryl-[protein] + H2O = L-seryl-[protein] + phosphate. The enzyme catalyses O-phospho-L-threonyl-[protein] + H2O = L-threonyl-[protein] + phosphate. In Nicotiana tabacum (Common tobacco), this protein is Serine/threonine-protein phosphatase PP2A-5 catalytic subunit (NPP5).